The following is a 255-amino-acid chain: Proteasome subunit alpha 2 (255 aa).

The disordered stretch occupies residues 229 to 255; the sequence is AGSSLEEMLPTPAATEDAPPANGDAPS. Positions 238 to 249 are enriched in low complexity; sequence PTPAATEDAPPA.

It belongs to the peptidase T1A family. In terms of assembly, the 20S proteasome core is composed of 14 alpha and 14 beta subunits that assemble into four stacked heptameric rings, resulting in a barrel-shaped structure. The two inner rings, each composed of seven catalytic beta subunits, are sandwiched by two outer rings, each composed of seven alpha subunits. All four combinations of alpha- and beta-subunits (beta2-alpha1, beta2-alpha2, beta1-alpha2 and beta1-alpha1) yield fully assembled and proteolytically active proteasomes. The catalytic chamber with the active sites is on the inside of the barrel. Has probably a gated structure, the ends of the cylinder being occluded by the N-termini of the alpha-subunits. Is likely capped by the proteasome-associated ATPase, ARC. In terms of processing, the N-terminus is blocked.

Its subcellular location is the cytoplasm. It participates in protein degradation; proteasomal Pup-dependent pathway. The formation of the proteasomal ATPase ARC-20S proteasome complex, likely via the docking of the C-termini of ARC into the intersubunit pockets in the alpha-rings, may trigger opening of the gate for substrate entry. Interconversion between the open-gate and close-gate conformations leads to a dynamic regulation of the 20S proteasome proteolysis activity. Component of the proteasome core, a large protease complex with broad specificity involved in protein degradation. The R.erythropolis proteasomes are able to cleave oligopeptides after Tyr, Phe and Leu, very poorly after Arg but not after Glu. Thus, displays chymotrypsin-like activity, low trypsin-like activity but no caspase-like activity. This Rhodococcus erythropolis (Arthrobacter picolinophilus) protein is Proteasome subunit alpha 2.